Here is a 309-residue protein sequence, read N- to C-terminus: Metal ABC transporter substrate-binding lipoprotein SsaB (309 aa).

An N-terminal signal peptide occupies residues 1 to 19 (MKKLGFLSLLLLAVCTLFA). A lipid anchor (N-palmitoyl cysteine) is attached at cysteine 20. Residue cysteine 20 is the site of S-diacylglycerol cysteine attachment. The a divalent metal cation site is built by histidine 67, histidine 139, glutamate 205, and aspartate 280.

It belongs to the bacterial solute-binding protein 9 family. Lipoprotein receptor antigen (Lrai) subfamily. In terms of assembly, homodimer and homotrimer.

The protein localises to the cell membrane. Part of an ATP-binding cassette (ABC) transport system involved in metal import. Binds a metal with high affinity and specificity and delivers it to the membrane permease for translocation into the cytoplasm. Also acts as an adhesin which is involved on adherence to extracellular matrix. It is an important factor in the pathogenesis and infection. May contribute to the formation and accumulation of dental plaque. This is Metal ABC transporter substrate-binding lipoprotein SsaB (ssaB) from Streptococcus sanguinis.